We begin with the raw amino-acid sequence, 622 residues long: MTEAKNYEFQAETKKLLDIVINSLYTERDVFVRELISNSADALEKMRHEALTCQEVLDEDLPLEITIDLDEEAHTLTISDSGIGMTEQELVNNLGVIAHSGSGSFYAELAEAVKKDVNLIGQFGVGFYAAFMAGNKVRVQTRSWDGSQGHEWLSEGAGSFTITPLDGLARGTRIVVELKDDAHEYAQDWKIKNVIEQYSSFVSFPIKLKGEVVNTVQALWSRSKSEISDEEYNEFYKFIGNATEDPSYRLHFSADAPLSIKSLLFVPKENFEVMGFGRVEPGVNLYCQRILIDQHSENILPGWLRFLKGVVDSEDLPLNISRQSLQDNALVSKIRRVVTKRFLKYLAEEATRDESQYLQFWSTFGIYLKEGVTTDYEYQKELGKLLRFETSKSELGVPVSLADYLLRMNPDQEKIYYINGASRAAIEAGPYVEMFKKKDIEIVYTLDPIDDFVLSHLQEFEGKKLVSADGADISLDKEEAEDALVDESGVDKAELAELLTWMKEELKDEVGDVLSSHRLVDAPAMIVNADGFMSASMERVLAASRKEQGIAGVDGSKKHLEINGKNPLIKQLAELRKADAGFAGEVAHQILDNAMIQAGLVVDPLKMVARNYKILDRAVSRA.

An a; substrate-binding region spans residues 1 to 322 (MTEAKNYEFQ…SEDLPLNISR (322 aa)). The b stretch occupies residues 323-539 (QSLQDNALVS…DGFMSASMER (217 aa)). A c region spans residues 540-622 (VLAASRKEQG…KILDRAVSRA (83 aa)).

The protein belongs to the heat shock protein 90 family. In terms of assembly, homodimer.

It is found in the cytoplasm. Molecular chaperone. Has ATPase activity. The polypeptide is Chaperone protein HtpG (Desulfotalea psychrophila (strain LSv54 / DSM 12343)).